The chain runs to 515 residues: Nuclear hormone receptor family member nhr-62 (515 aa).

The segment at residues 95–170 (NLVCVVCGDQ…AGMNPRAVQS (76 aa)) is a DNA-binding region (nuclear receptor). 2 consecutive NR C4-type zinc fingers follow at residues 98-118 (CVVCGDQAFGKHYGVNACNGC) and 134-153 (CRFEGRCAIAKEHRNVCRAC). Residues 169-195 (QSERVEREQNGSPNQIEEDDYKDLSSP) form a disordered region. Positions 225–509 (EMAKLSEQIV…YLCHEVQFIQ (285 aa)) constitute an NR LBD domain. The interval 498–509 (SEYLCHEVQFIQ) is AF-2.

It belongs to the nuclear hormone receptor family. In terms of tissue distribution, widely expressed at a low level in many tissues including the pharynx, sensory neurons, intestine, spermatheca, hypodermis, and excretory cell.

It localises to the nucleus. Its function is as follows. Orphan nuclear hormone receptor. Required for metabolic and physiologic responses associated with dietary-restriction-induced longevity. Modulates triglyceride and lipid metabolism and autophagy, associated with dietary-restriction, probably acting via regulation of transcription of target genes. This is Nuclear hormone receptor family member nhr-62 (nhr-62) from Caenorhabditis elegans.